The following is a 78-amino-acid chain: Acyl carrier protein (78 aa).

A Carrier domain is found at 2 to 77 (SNIEERVKKI…AAIDYVTSNA (76 aa)). Ser-37 carries the post-translational modification O-(pantetheine 4'-phosphoryl)serine.

This sequence belongs to the acyl carrier protein (ACP) family. Post-translationally, 4'-phosphopantetheine is transferred from CoA to a specific serine of apo-ACP by AcpS. This modification is essential for activity because fatty acids are bound in thioester linkage to the sulfhydryl of the prosthetic group.

The protein localises to the cytoplasm. It functions in the pathway lipid metabolism; fatty acid biosynthesis. Its function is as follows. Carrier of the growing fatty acid chain in fatty acid biosynthesis. This Vibrio cholerae serotype O1 (strain ATCC 39315 / El Tor Inaba N16961) protein is Acyl carrier protein.